A 484-amino-acid chain; its full sequence is Cobyric acid synthase (484 aa).

Residues 249–438 (QLRVAVPVFT…LHGIFDRPET (190 aa)) form the GATase cobBQ-type domain. The active-site Nucleophile is the Cys-330. The active site involves His-430.

This sequence belongs to the CobB/CobQ family. CobQ subfamily.

It participates in cofactor biosynthesis; adenosylcobalamin biosynthesis. Functionally, catalyzes amidations at positions B, D, E, and G on adenosylcobyrinic A,C-diamide. NH(2) groups are provided by glutamine, and one molecule of ATP is hydrogenolyzed for each amidation. This is Cobyric acid synthase from Vibrio cholerae serotype O1 (strain ATCC 39315 / El Tor Inaba N16961).